Here is a 417-residue protein sequence, read N- to C-terminus: Gamma-glutamyl phosphate reductase (417 aa).

This sequence belongs to the gamma-glutamyl phosphate reductase family.

It is found in the cytoplasm. It carries out the reaction L-glutamate 5-semialdehyde + phosphate + NADP(+) = L-glutamyl 5-phosphate + NADPH + H(+). It participates in amino-acid biosynthesis; L-proline biosynthesis; L-glutamate 5-semialdehyde from L-glutamate: step 2/2. Functionally, catalyzes the NADPH-dependent reduction of L-glutamate 5-phosphate into L-glutamate 5-semialdehyde and phosphate. The product spontaneously undergoes cyclization to form 1-pyrroline-5-carboxylate. The chain is Gamma-glutamyl phosphate reductase from Phocaeicola vulgatus (strain ATCC 8482 / DSM 1447 / JCM 5826 / CCUG 4940 / NBRC 14291 / NCTC 11154) (Bacteroides vulgatus).